Here is a 637-residue protein sequence, read N- to C-terminus: Chaperone protein DnaK (637 aa).

Thr-198 carries the phosphothreonine; by autocatalysis modification. The disordered stretch occupies residues 597–637 (MYAKTSQAGAGPQPGAGPGTGGQGPGKKDEDVVDADFEEVK). A compositionally biased stretch (gly residues) spans 608 to 621 (PQPGAGPGTGGQGP). Residues 627 to 637 (DVVDADFEEVK) are compositionally biased toward acidic residues.

The protein belongs to the heat shock protein 70 family.

In terms of biological role, acts as a chaperone. This chain is Chaperone protein DnaK, found in Syntrophus aciditrophicus (strain SB).